Reading from the N-terminus, the 229-residue chain is Orotidine 5'-phosphate decarboxylase (229 aa).

Substrate is bound by residues aspartate 10, lysine 32, 59–68 (DLKFHDIPNT), threonine 119, arginine 180, glutamine 189, glycine 209, and arginine 210. The Proton donor role is filled by lysine 61.

It belongs to the OMP decarboxylase family. Type 1 subfamily. Homodimer.

The enzyme catalyses orotidine 5'-phosphate + H(+) = UMP + CO2. It participates in pyrimidine metabolism; UMP biosynthesis via de novo pathway; UMP from orotate: step 2/2. Its function is as follows. Catalyzes the decarboxylation of orotidine 5'-monophosphate (OMP) to uridine 5'-monophosphate (UMP). This Legionella pneumophila (strain Lens) protein is Orotidine 5'-phosphate decarboxylase.